A 288-amino-acid chain; its full sequence is Ribonuclease HIII (288 aa).

In terms of domain architecture, RNase H type-2 spans 76-288 (YSAIGSDEVG…KNITKQFIKN (213 aa)). The a divalent metal cation site is built by D82, E83, and D185.

It belongs to the RNase HII family. RnhC subfamily. Requires Mn(2+) as cofactor. It depends on Mg(2+) as a cofactor.

The protein resides in the cytoplasm. The catalysed reaction is Endonucleolytic cleavage to 5'-phosphomonoester.. Endonuclease that specifically degrades the RNA of RNA-DNA hybrids. The polypeptide is Ribonuclease HIII (Phytoplasma mali (strain AT)).